A 419-amino-acid chain; its full sequence is Phosphoribosylamine--glycine ligase (419 aa).

The ATP-grasp domain occupies 109–311; the sequence is KQLLIEAGVP…LEKVLMACVE (203 aa). 135 to 191 lines the ATP pocket; it reads ATKMGAPIVVKADGLAAGKGVIVAQTSAEATTAIAELFDQGFEKIVVEEFLPGEEVS. Mg(2+)-binding residues include E281 and N283.

Belongs to the GARS family. The cofactor is Mg(2+). Mn(2+) serves as cofactor.

The catalysed reaction is 5-phospho-beta-D-ribosylamine + glycine + ATP = N(1)-(5-phospho-beta-D-ribosyl)glycinamide + ADP + phosphate + H(+). Its pathway is purine metabolism; IMP biosynthesis via de novo pathway; N(1)-(5-phospho-D-ribosyl)glycinamide from 5-phospho-alpha-D-ribose 1-diphosphate: step 2/2. This chain is Phosphoribosylamine--glycine ligase, found in Synechocystis sp. (strain ATCC 27184 / PCC 6803 / Kazusa).